The sequence spans 99 residues: Nucleoid-associated protein UPA3_0088 (99 aa).

It belongs to the YbaB/EbfC family. As to quaternary structure, homodimer.

The protein resides in the cytoplasm. Its subcellular location is the nucleoid. Its function is as follows. Binds to DNA and alters its conformation. May be involved in regulation of gene expression, nucleoid organization and DNA protection. This chain is Nucleoid-associated protein UPA3_0088, found in Ureaplasma parvum serovar 3 (strain ATCC 27815 / 27 / NCTC 11736).